The sequence spans 138 residues: MKSITRRFARLCALQALYAWQLSKNDYTMISNYVIKIQNIQNFNISYFLTLYIGVIHTIKELNTLMIPYLSRGLKAIDYIEYSVLLIALFELTQCCDVPYKVVINEAIELAKIFGSEKSHKFINGVLDKIITEKLYKG.

The protein belongs to the NusB family.

Functionally, involved in transcription antitermination. Required for transcription of ribosomal RNA (rRNA) genes. Binds specifically to the boxA antiterminator sequence of the ribosomal RNA (rrn) operons. In Blochmanniella floridana, this protein is Transcription antitermination protein NusB.